The following is a 162-amino-acid chain: Large ribosomal subunit protein uL10 (162 aa).

This sequence belongs to the universal ribosomal protein uL10 family. In terms of assembly, part of the ribosomal stalk of the 50S ribosomal subunit. The N-terminus interacts with L11 and the large rRNA to form the base of the stalk. The C-terminus forms an elongated spine to which L12 dimers bind in a sequential fashion forming a multimeric L10(L12)X complex.

Its function is as follows. Forms part of the ribosomal stalk, playing a central role in the interaction of the ribosome with GTP-bound translation factors. This Borreliella burgdorferi (strain ATCC 35210 / DSM 4680 / CIP 102532 / B31) (Borrelia burgdorferi) protein is Large ribosomal subunit protein uL10 (rplJ).